The sequence spans 177 residues: dCTP deaminase, dUMP-forming (177 aa).

Residues 98 to 103 (RSSVGR), Asn110, 115 to 118 (DPGF), 123 to 125 (TLE), Gln144, 157 to 160 (YQGK), and Gln164 contribute to the dCTP site. The active-site Proton donor/acceptor is the Glu125.

The protein belongs to the dCTP deaminase family. As to quaternary structure, homotrimer. Mg(2+) is required as a cofactor.

It catalyses the reaction dCTP + 2 H2O = dUMP + NH4(+) + diphosphate. It functions in the pathway pyrimidine metabolism; dUMP biosynthesis; dUMP from dCTP: step 1/1. With respect to regulation, inhibited by dTTP. Bifunctional enzyme that catalyzes both the deamination of dCTP to dUTP and the hydrolysis of dUTP to dUMP without releasing the toxic dUTP intermediate. The chain is dCTP deaminase, dUMP-forming from Halalkalibacterium halodurans (strain ATCC BAA-125 / DSM 18197 / FERM 7344 / JCM 9153 / C-125) (Bacillus halodurans).